The sequence spans 552 residues: Chaperonin GroEL (552 aa).

Residues 30 to 33 (TLGP), Lys-51, 87 to 91 (DGTTT), Gly-415, 480 to 482 (NAA), and Asp-496 contribute to the ATP site.

Belongs to the chaperonin (HSP60) family. In terms of assembly, forms a cylinder of 14 subunits composed of two heptameric rings stacked back-to-back. Interacts with the co-chaperonin GroES.

It localises to the cytoplasm. The catalysed reaction is ATP + H2O + a folded polypeptide = ADP + phosphate + an unfolded polypeptide.. In terms of biological role, together with its co-chaperonin GroES, plays an essential role in assisting protein folding. The GroEL-GroES system forms a nano-cage that allows encapsulation of the non-native substrate proteins and provides a physical environment optimized to promote and accelerate protein folding. The polypeptide is Chaperonin GroEL (Coxiella burnetii (strain RSA 493 / Nine Mile phase I)).